A 459-amino-acid chain; its full sequence is UDP-N-acetylmuramoylalanine--D-glutamate ligase (459 aa).

120–126 (GSNGKTT) is an ATP binding site.

The protein belongs to the MurCDEF family.

Its subcellular location is the cytoplasm. It catalyses the reaction UDP-N-acetyl-alpha-D-muramoyl-L-alanine + D-glutamate + ATP = UDP-N-acetyl-alpha-D-muramoyl-L-alanyl-D-glutamate + ADP + phosphate + H(+). It participates in cell wall biogenesis; peptidoglycan biosynthesis. Functionally, cell wall formation. Catalyzes the addition of glutamate to the nucleotide precursor UDP-N-acetylmuramoyl-L-alanine (UMA). This Lactobacillus helveticus (strain DPC 4571) protein is UDP-N-acetylmuramoylalanine--D-glutamate ligase.